We begin with the raw amino-acid sequence, 257 residues long: MALAKRIIPCLDVTAGRVVKGVNFVELRDAGDPVEIARRYDDQGADELTFLDITATSDQRDLILPIIEAVASQVFIPLTVGGGVRAVEDVRRLLNAGADKISMNSSAVANPQLVKDATDKYGSQCIVVAIDAKRVSADGEPPRWEVFTHGGRKATGLEAVEWARKMAELGAGEILLTSMDRDGTKSGFDLALTRAVSDAVPIPVIASGGVGNLQHLADGIKNGHADAVLAASIFHYGEHTVGEAKRFMADQGISVRL.

Catalysis depends on residues aspartate 12 and aspartate 131.

This sequence belongs to the HisA/HisF family. As to quaternary structure, heterodimer of HisH and HisF.

It localises to the cytoplasm. The catalysed reaction is 5-[(5-phospho-1-deoxy-D-ribulos-1-ylimino)methylamino]-1-(5-phospho-beta-D-ribosyl)imidazole-4-carboxamide + L-glutamine = D-erythro-1-(imidazol-4-yl)glycerol 3-phosphate + 5-amino-1-(5-phospho-beta-D-ribosyl)imidazole-4-carboxamide + L-glutamate + H(+). It participates in amino-acid biosynthesis; L-histidine biosynthesis; L-histidine from 5-phospho-alpha-D-ribose 1-diphosphate: step 5/9. Its function is as follows. IGPS catalyzes the conversion of PRFAR and glutamine to IGP, AICAR and glutamate. The HisF subunit catalyzes the cyclization activity that produces IGP and AICAR from PRFAR using the ammonia provided by the HisH subunit. This chain is Imidazole glycerol phosphate synthase subunit HisF, found in Paraburkholderia phytofirmans (strain DSM 17436 / LMG 22146 / PsJN) (Burkholderia phytofirmans).